The following is a 159-amino-acid chain: Transcription elongation factor GreA (159 aa).

This sequence belongs to the GreA/GreB family.

Necessary for efficient RNA polymerase transcription elongation past template-encoded arresting sites. The arresting sites in DNA have the property of trapping a certain fraction of elongating RNA polymerases that pass through, resulting in locked ternary complexes. Cleavage of the nascent transcript by cleavage factors such as GreA or GreB allows the resumption of elongation from the new 3'terminus. GreA releases sequences of 2 to 3 nucleotides. In Orientia tsutsugamushi (strain Boryong) (Rickettsia tsutsugamushi), this protein is Transcription elongation factor GreA.